A 248-amino-acid polypeptide reads, in one-letter code: Ribonuclease PH (248 aa).

Phosphate contacts are provided by residues Arg-93 and 131 to 133 (GTR).

It belongs to the RNase PH family. As to quaternary structure, homohexameric ring arranged as a trimer of dimers.

The enzyme catalyses tRNA(n+1) + phosphate = tRNA(n) + a ribonucleoside 5'-diphosphate. In terms of biological role, phosphorolytic 3'-5' exoribonuclease that plays an important role in tRNA 3'-end maturation. Removes nucleotide residues following the 3'-CCA terminus of tRNAs; can also add nucleotides to the ends of RNA molecules by using nucleoside diphosphates as substrates, but this may not be physiologically important. Probably plays a role in initiation of 16S rRNA degradation (leading to ribosome degradation) during starvation. The chain is Ribonuclease PH from Bifidobacterium longum (strain NCC 2705).